A 252-amino-acid chain; its full sequence is Adenosylcobinamide-GDP ribazoletransferase (252 aa).

7 consecutive transmembrane segments (helical) span residues 4–24, 35–55, 65–85, 102–122, 178–198, 201–221, and 232–252; these read LLLLNLLASIIFYTSIPLPYI, LVPMVGLIIGVILGLLDGGMN, SALVVALWIFITGGLHLDGAM, VMADSATGAFGAMSAIAILLL, LLPGLCLMVAVSSLFWLVNNH, LITVVGLITGSAIASLTAAWF, and TYGAVVEWTEALFLCVLTILT.

It belongs to the CobS family. Mg(2+) serves as cofactor.

The protein localises to the cell inner membrane. The enzyme catalyses alpha-ribazole + adenosylcob(III)inamide-GDP = adenosylcob(III)alamin + GMP + H(+). The catalysed reaction is alpha-ribazole 5'-phosphate + adenosylcob(III)inamide-GDP = adenosylcob(III)alamin 5'-phosphate + GMP + H(+). The protein operates within cofactor biosynthesis; adenosylcobalamin biosynthesis; adenosylcobalamin from cob(II)yrinate a,c-diamide: step 7/7. In terms of biological role, joins adenosylcobinamide-GDP and alpha-ribazole to generate adenosylcobalamin (Ado-cobalamin). Also synthesizes adenosylcobalamin 5'-phosphate from adenosylcobinamide-GDP and alpha-ribazole 5'-phosphate. This is Adenosylcobinamide-GDP ribazoletransferase from Trichormus variabilis (strain ATCC 29413 / PCC 7937) (Anabaena variabilis).